We begin with the raw amino-acid sequence, 622 residues long: Low affinity potassium transport system protein Kup (622 aa).

The next 12 membrane-spanning stretches (helical) occupy residues 9–29 (LPAV…TSPL), 49–69 (VFGF…LKYL), 101–121 (VLVI…VITP), 137–157 (PAMD…LFII), 165–185 (VGKL…VLGV), 212–232 (AVSF…EALY), 247–267 (WFTV…ALLL), 276–296 (PFFL…ATLA), 337–357 (IYIP…IVSF), 363–383 (LAAA…ILFC), 397–417 (AWVL…ANVV), and 419–439 (ILSG…IMTT).

The protein belongs to the HAK/KUP transporter (TC 2.A.72) family.

It is found in the cell inner membrane. The enzyme catalyses K(+)(in) + H(+)(in) = K(+)(out) + H(+)(out). Functionally, responsible for the low-affinity transport of potassium into the cell. Likely operates as a K(+):H(+) symporter. This is Low affinity potassium transport system protein Kup from Pectobacterium atrosepticum (strain SCRI 1043 / ATCC BAA-672) (Erwinia carotovora subsp. atroseptica).